The following is a 440-amino-acid chain: Tetratricopeptide repeat protein 5 (440 aa).

5 TPR repeats span residues glutamate 7 to valine 61, alanine 68 to leucine 98, valine 103 to leucine 130, lysine 136 to methionine 174, and glycine 179 to valine 216. Residues leucine 13–tyrosine 24 carry the Nuclear export signal motif. Position 203 is a phosphoserine; by ATM (serine 203). Residue serine 221 is modified to Phosphoserine; by CHEK2. The stretch at proline 224–leucine 253 is one TPR 6 repeat. A mediates interaction with 28S rRNA of ribosome-coding tubulin region spans residues lysine 285–lysine 287.

Interacts with JMY and p300/EP300; the interaction occurs in the nucleus and augments the association between JMY and p300/EP300 in response to DNA damage. Interacts with PRMT5; the interaction is DNA damage-dependent and promotes PRMT5 interaction with p53/TP53 and subsequent methylation. Forms a complex with HSF1 and p300/EP300; these interactions augment chromatin-bound HSF1 and p300/EP300 histone acetyltransferase activity, resulting in enhanced heat-shock-responsive transcription. Interacts with JMY; the interaction occurs in the cytoplasm and results in the inhibition of JYM's nucleation activity. Interacts with ribosome-coding tubulin (via 60S subunit 28S rRNA and protein uL24/RPL26) and the N-terminal of nascent tubulin polypeptide (via alpha-tubulin MREC motif and beta-tubulin MREI motif); these interactions result in tubulin mRNA-targeted degradation. Interacts with ATP5F1B; the interaction occurs in the mitochondria and results in ATP production decrease. Interacts with p53/TP53; the interaction occurs in the mitochondria and results in increased apoptosis. Post-translationally, phosphorylation by ATM kinase induces nuclear accumulation while interfering with nuclear export, and phosphorylation by CHEK2 kinase enhances nuclear stability.

It localises to the nucleus. The protein resides in the cytoplasm. Its subcellular location is the cytoplasmic vesicle. It is found in the mitochondrion matrix. Its function is as follows. Cofactor involved in the regulation of various cellular mechanisms such as actin regulation, autophagy, chromatin regulation and DNA repair. In physiological conditions, interacts with cofactor JMY in the cytoplasm which prevents JMY's actin nucleation activity and ability to activate the Arp2/3 complex. Acts as a negative regulator of nutrient stress-induced autophagy by inhibiting JMY's interaction with MAP1LC3B, thereby preventing autophagosome formation. Involves in tubulin autoregulation by promoting its degradation in response to excess soluble tubulin. To do so, associates with the active ribosome near the ribosome exit tunnel and with nascent tubulin polypeptides early during their translation, triggering tubulin mRNA-targeted degradation. Following DNA damage, phosphorylated by DNA damage responsive protein kinases ATM and CHEK2, leading to its nuclear accumulation and stability. Nuclear TTC5/STRAP promotes the assembly of a stress-responsive p53/TP53 coactivator complex, which includes the coactivators JMY and p300, thereby increasing p53/TP53-dependent transcription and apoptosis. Also recruits arginine methyltransferase PRMT5 to p53/TP53 when DNA is damaged, allowing PRMT5 to methylate p53/TP53. In DNA stress conditions, also prevents p53/TP53 degradation by E3 ubiquitin ligase MDM2. Upon heat-shock stress, forms a chromatin-associated complex with heat-shock factor 1 HSF1 and p300/EP300 to stimulate heat-shock-responsive transcription, thereby increasing cell survival. Mitochondrial TTC5/STRAP interacts with ATP synthase subunit beta ATP5F1B which decreased ATP synthase activity and lowers mitochondrial ATP production, thereby regulating cellular respiration and mitochondrial-dependent apoptosis. Mitochondrial TTC5/STRAP also regulates p53/TP53-mediated apoptosis. This Bos taurus (Bovine) protein is Tetratricopeptide repeat protein 5 (TTC5).